The following is a 579-amino-acid chain: 2-succinyl-5-enolpyruvyl-6-hydroxy-3-cyclohexene-1-carboxylate synthase (579 aa).

It belongs to the TPP enzyme family. MenD subfamily. As to quaternary structure, homodimer. The cofactor is Mg(2+). Mn(2+) is required as a cofactor. It depends on thiamine diphosphate as a cofactor.

It catalyses the reaction isochorismate + 2-oxoglutarate + H(+) = 5-enolpyruvoyl-6-hydroxy-2-succinyl-cyclohex-3-ene-1-carboxylate + CO2. Its pathway is quinol/quinone metabolism; 1,4-dihydroxy-2-naphthoate biosynthesis; 1,4-dihydroxy-2-naphthoate from chorismate: step 2/7. It functions in the pathway quinol/quinone metabolism; menaquinone biosynthesis. Its function is as follows. Catalyzes the thiamine diphosphate-dependent decarboxylation of 2-oxoglutarate and the subsequent addition of the resulting succinic semialdehyde-thiamine pyrophosphate anion to isochorismate to yield 2-succinyl-5-enolpyruvyl-6-hydroxy-3-cyclohexene-1-carboxylate (SEPHCHC). This Shewanella frigidimarina (strain NCIMB 400) protein is 2-succinyl-5-enolpyruvyl-6-hydroxy-3-cyclohexene-1-carboxylate synthase.